Consider the following 262-residue polypeptide: Cyclin-dependent kinase inhibitor 1 (262 aa).

Residues 140 to 212 (SDVAEAGSEH…SAQQATRPKI (73 aa)) are disordered. The span at 160-169 (SGRDRERRET) shows a compositional bias: basic and acidic residues. Low complexity predominate over residues 198–208 (SAATASAQQAT).

It belongs to the CDI family. ICK/KRP subfamily.

This chain is Cyclin-dependent kinase inhibitor 1 (KRP1), found in Oryza sativa subsp. indica (Rice).